The primary structure comprises 1427 residues: DNA-directed RNA polymerase subunit beta' (1427 aa).

Cys66, Cys68, Cys81, and Cys84 together coordinate Zn(2+). Residues Asp472, Asp474, and Asp476 each coordinate Mg(2+). Zn(2+) contacts are provided by Cys815, Cys889, Cys896, and Cys899.

This sequence belongs to the RNA polymerase beta' chain family. As to quaternary structure, the RNAP catalytic core consists of 2 alpha, 1 beta, 1 beta' and 1 omega subunit. When a sigma factor is associated with the core the holoenzyme is formed, which can initiate transcription. It depends on Mg(2+) as a cofactor. The cofactor is Zn(2+).

The enzyme catalyses RNA(n) + a ribonucleoside 5'-triphosphate = RNA(n+1) + diphosphate. Its function is as follows. DNA-dependent RNA polymerase catalyzes the transcription of DNA into RNA using the four ribonucleoside triphosphates as substrates. In Bacteroides fragilis (strain ATCC 25285 / DSM 2151 / CCUG 4856 / JCM 11019 / LMG 10263 / NCTC 9343 / Onslow / VPI 2553 / EN-2), this protein is DNA-directed RNA polymerase subunit beta'.